A 198-amino-acid polypeptide reads, in one-letter code: Peptide deformylase (198 aa).

Positions 123 and 170 each coordinate Fe cation. Residue glutamate 171 is part of the active site. Histidine 174 is a binding site for Fe cation.

This sequence belongs to the polypeptide deformylase family. It depends on Fe(2+) as a cofactor.

The enzyme catalyses N-terminal N-formyl-L-methionyl-[peptide] + H2O = N-terminal L-methionyl-[peptide] + formate. In terms of biological role, removes the formyl group from the N-terminal Met of newly synthesized proteins. Requires at least a dipeptide for an efficient rate of reaction. N-terminal L-methionine is a prerequisite for activity but the enzyme has broad specificity at other positions. The sequence is that of Peptide deformylase from Mycoplasmopsis pulmonis (strain UAB CTIP) (Mycoplasma pulmonis).